The primary structure comprises 196 residues: uncharacterized protein (196 aa).

Residues 1–183 (MREFHYGVHM…RFLFILSDLG (183 aa)) enclose the Macro domain.

It belongs to the MacroD-type family.

This is an uncharacterized protein from Thermoplasma acidophilum (strain ATCC 25905 / DSM 1728 / JCM 9062 / NBRC 15155 / AMRC-C165).